The following is a 1322-amino-acid chain: WD repeat-containing protein 17 (1322 aa).

WD repeat units lie at residues 81–121 (EHKK…VIAK), 123–164 (DSTK…SGVI), 171–211 (SFLS…QKHV), 221–261 (DEED…CITT), and 266–307 (SAAA…PIDN). The segment at 328–352 (KFSVQSPTKNHYTSSTSEAVPPPTL) is disordered. Polar residues predominate over residues 330–345 (SVQSPTKNHYTSSTSE). 7 WD repeats span residues 391 to 431 (GHVE…AVYT), 434 to 474 (GNEG…IIQR), 478 to 518 (HGTN…LHKY), 519 to 559 (KHPA…DQPL), 564 to 604 (GHTA…CINI), 607 to 647 (GHTA…CVDT), and 650 to 690 (DHGA…TPVQ).

This chain is WD repeat-containing protein 17 (WDR17), found in Homo sapiens (Human).